Consider the following 729-residue polypeptide: Rho GTPase-activating protein 28 (729 aa).

Disordered regions lie at residues 20–42 and 55–105; these read AQPP…LSRK and SNES…AEVT. Over residues 65 to 75 the composition is skewed to polar residues; that stretch reads SRSNSEASVDS. Phosphoserine is present on Ser72. Over residues 80–89 the composition is skewed to basic and acidic residues; it reads DFWREIESIK. The residue at position 159 (Thr159) is a Phosphothreonine. A disordered region spans residues 176–236; sequence GVSESPPRDT…SQDKEGSFAV (61 aa). The segment covering 195-204 has biased composition (basic and acidic residues); sequence GTKEERELPR. The span at 217 to 226 shows a compositional bias: polar residues; the sequence is SLNSTTLSDA. The 198-residue stretch at 380 to 577 folds into the Rho-GAP domain; the sequence is VPLTVLLDGD…LMLKYQKILW (198 aa). The segment at 612–631 is disordered; sequence TLERETASPKTSKVLQKSPS. The segment covering 619–630 has biased composition (polar residues); sequence SPKTSKVLQKSP.

Expressed in testis. Expressed at moderate level in kidney and ovary, and weakly expressed in spleen and skeletal muscle.

Functionally, GTPase activator for the Rho-type GTPases by converting them to an inactive GDP-bound state. The sequence is that of Rho GTPase-activating protein 28 (ARHGAP28) from Homo sapiens (Human).